Consider the following 374-residue polypeptide: tRNA-specific 2-thiouridylase MnmA (374 aa).

ATP is bound by residues 10 to 17 (AMSGGVDS) and Leu36. Catalysis depends on Cys111, which acts as the Nucleophile. A disulfide bond links Cys111 and Cys209. ATP is bound at residue Gly135. Residues 159–161 (KDQ) form an interaction with tRNA region. Cys209 acts as the Cysteine persulfide intermediate in catalysis.

The protein belongs to the MnmA/TRMU family.

Its subcellular location is the cytoplasm. It carries out the reaction S-sulfanyl-L-cysteinyl-[protein] + uridine(34) in tRNA + AH2 + ATP = 2-thiouridine(34) in tRNA + L-cysteinyl-[protein] + A + AMP + diphosphate + H(+). Functionally, catalyzes the 2-thiolation of uridine at the wobble position (U34) of tRNA, leading to the formation of s(2)U34. This Acidobacterium capsulatum (strain ATCC 51196 / DSM 11244 / BCRC 80197 / JCM 7670 / NBRC 15755 / NCIMB 13165 / 161) protein is tRNA-specific 2-thiouridylase MnmA.